Consider the following 262-residue polypeptide: Adenosylcobinamide-GDP ribazoletransferase (262 aa).

Transmembrane regions (helical) follow at residues 41–63, 68–85, 115–134, 141–163, and 201–221; these read AFPFAGLAIALPSAAVAMALMAL, LFAAFVVVAIQALVTGAL, IGTYAAVALILSFGLRVSAF, FSPLGAAMAILGAACLSRAAMVW, and LLFYLAQVPALGVIAALVAFL.

The protein belongs to the CobS family. As to quaternary structure, associated with a large complex of proteins. Mg(2+) is required as a cofactor.

It localises to the cell inner membrane. It catalyses the reaction alpha-ribazole + adenosylcob(III)inamide-GDP = adenosylcob(III)alamin + GMP + H(+). It carries out the reaction alpha-ribazole 5'-phosphate + adenosylcob(III)inamide-GDP = adenosylcob(III)alamin 5'-phosphate + GMP + H(+). The protein operates within cofactor biosynthesis; adenosylcobalamin biosynthesis; adenosylcobalamin from cob(II)yrinate a,c-diamide: step 7/7. Joins adenosylcobinamide-GDP and alpha-ribazole to generate adenosylcobalamin (Ado-cobalamin). Also synthesizes adenosylcobalamin 5'-phosphate from adenosylcobinamide-GDP and alpha-ribazole 5'-phosphate. In Sinorhizobium sp, this protein is Adenosylcobinamide-GDP ribazoletransferase (cobV).